Reading from the N-terminus, the 291-residue chain is NAD kinase (291 aa).

The Proton acceptor role is filled by D73. Residues 73 to 74 (DG), 147 to 148 (ND), R175, D177, 188 to 193 (TAYALS), A212, and Q246 each bind NAD(+).

Belongs to the NAD kinase family. A divalent metal cation is required as a cofactor.

The protein resides in the cytoplasm. It carries out the reaction NAD(+) + ATP = ADP + NADP(+) + H(+). In terms of biological role, involved in the regulation of the intracellular balance of NAD and NADP, and is a key enzyme in the biosynthesis of NADP. Catalyzes specifically the phosphorylation on 2'-hydroxyl of the adenosine moiety of NAD to yield NADP. In Polaromonas naphthalenivorans (strain CJ2), this protein is NAD kinase.